Here is a 127-residue protein sequence, read N- to C-terminus: Large ribosomal subunit protein eL8 (127 aa).

It belongs to the eukaryotic ribosomal protein eL8 family. In terms of assembly, part of the 50S ribosomal subunit. Probably part of the RNase P complex.

It localises to the cytoplasm. Multifunctional RNA-binding protein that recognizes the K-turn motif in ribosomal RNA, the RNA component of RNase P, box H/ACA, box C/D and box C'/D' sRNAs. In Hyperthermus butylicus (strain DSM 5456 / JCM 9403 / PLM1-5), this protein is Large ribosomal subunit protein eL8.